Consider the following 218-residue polypeptide: Pyridoxine/pyridoxamine 5'-phosphate oxidase (218 aa).

Residues 11-14 (RVEY) and K75 each bind substrate. FMN is bound by residues 70–75 (RTVLCK), 85–86 (YT), K92, and Q114. The substrate site is built by Y132, R136, and S140. FMN contacts are provided by residues 149 to 150 (QS) and W195. Residue 201–203 (RVH) coordinates substrate. R205 is an FMN binding site.

It belongs to the pyridoxamine 5'-phosphate oxidase family. Homodimer. The cofactor is FMN.

It catalyses the reaction pyridoxamine 5'-phosphate + O2 + H2O = pyridoxal 5'-phosphate + H2O2 + NH4(+). The catalysed reaction is pyridoxine 5'-phosphate + O2 = pyridoxal 5'-phosphate + H2O2. Its pathway is cofactor metabolism; pyridoxal 5'-phosphate salvage; pyridoxal 5'-phosphate from pyridoxamine 5'-phosphate: step 1/1. The protein operates within cofactor metabolism; pyridoxal 5'-phosphate salvage; pyridoxal 5'-phosphate from pyridoxine 5'-phosphate: step 1/1. Its function is as follows. Catalyzes the oxidation of either pyridoxine 5'-phosphate (PNP) or pyridoxamine 5'-phosphate (PMP) into pyridoxal 5'-phosphate (PLP). The polypeptide is Pyridoxine/pyridoxamine 5'-phosphate oxidase (Mycolicibacterium gilvum (strain PYR-GCK) (Mycobacterium gilvum (strain PYR-GCK))).